We begin with the raw amino-acid sequence, 291 residues long: ATP synthase gamma chain (291 aa).

The protein belongs to the ATPase gamma chain family. In terms of assembly, F-type ATPases have 2 components, CF(1) - the catalytic core - and CF(0) - the membrane proton channel. CF(1) has five subunits: alpha(3), beta(3), gamma(1), delta(1), epsilon(1). CF(0) has three main subunits: a, b and c.

The protein resides in the cell inner membrane. In terms of biological role, produces ATP from ADP in the presence of a proton gradient across the membrane. The gamma chain is believed to be important in regulating ATPase activity and the flow of protons through the CF(0) complex. The chain is ATP synthase gamma chain from Neisseria gonorrhoeae (strain NCCP11945).